The chain runs to 232 residues: Small ribosomal subunit protein uS2 (232 aa).

The protein belongs to the universal ribosomal protein uS2 family.

The protein is Small ribosomal subunit protein uS2 of Alkaliphilus oremlandii (strain OhILAs) (Clostridium oremlandii (strain OhILAs)).